A 339-amino-acid polypeptide reads, in one-letter code: Putative adenosine/adenine deaminase (339 aa).

The Zn(2+) site is built by histidine 16, histidine 18, and histidine 200. Histidine 18 is a substrate binding site. Glutamate 203 functions as the Proton donor in the catalytic mechanism. Residue aspartate 281 coordinates Zn(2+). Aspartate 282 lines the substrate pocket.

The protein belongs to the metallo-dependent hydrolases superfamily. Adenosine and AMP deaminases family. Requires Zn(2+) as cofactor.

Putative nucleoside deaminase. May catalyze the hydrolytic deamination of adenosine or some similar substrate and play a role in purine metabolism. In Streptomyces virginiae (Streptomyces cinnamonensis), this protein is Putative adenosine/adenine deaminase.